We begin with the raw amino-acid sequence, 192 residues long: Adenylate kinase (192 aa).

10 to 18 (GVPGVGGTT) is an ATP binding site.

The protein belongs to the archaeal adenylate kinase family. As to quaternary structure, monomer.

Its subcellular location is the cytoplasm. It carries out the reaction AMP + ATP = 2 ADP. This chain is Adenylate kinase (adkA), found in Methanothermococcus thermolithotrophicus (Methanococcus thermolithotrophicus).